Consider the following 160-residue polypeptide: Crossover junction endodeoxyribonuclease RuvC (160 aa).

Residues Asp-9, Glu-68, and Asp-141 contribute to the active site. Mg(2+) contacts are provided by Asp-9, Glu-68, and Asp-141.

It belongs to the RuvC family. Homodimer which binds Holliday junction (HJ) DNA. The HJ becomes 2-fold symmetrical on binding to RuvC with unstacked arms; it has a different conformation from HJ DNA in complex with RuvA. In the full resolvosome a probable DNA-RuvA(4)-RuvB(12)-RuvC(2) complex forms which resolves the HJ. Mg(2+) serves as cofactor.

It localises to the cytoplasm. The enzyme catalyses Endonucleolytic cleavage at a junction such as a reciprocal single-stranded crossover between two homologous DNA duplexes (Holliday junction).. In terms of biological role, the RuvA-RuvB-RuvC complex processes Holliday junction (HJ) DNA during genetic recombination and DNA repair. Endonuclease that resolves HJ intermediates. Cleaves cruciform DNA by making single-stranded nicks across the HJ at symmetrical positions within the homologous arms, yielding a 5'-phosphate and a 3'-hydroxyl group; requires a central core of homology in the junction. The consensus cleavage sequence is 5'-(A/T)TT(C/G)-3'. Cleavage occurs on the 3'-side of the TT dinucleotide at the point of strand exchange. HJ branch migration catalyzed by RuvA-RuvB allows RuvC to scan DNA until it finds its consensus sequence, where it cleaves and resolves the cruciform DNA. The polypeptide is Crossover junction endodeoxyribonuclease RuvC (Campylobacter jejuni (strain RM1221)).